The following is a 107-amino-acid chain: Nucleoid-associated protein HNE_0371 (107 aa).

It belongs to the YbaB/EbfC family. Homodimer.

Its subcellular location is the cytoplasm. The protein localises to the nucleoid. In terms of biological role, binds to DNA and alters its conformation. May be involved in regulation of gene expression, nucleoid organization and DNA protection. This is Nucleoid-associated protein HNE_0371 from Hyphomonas neptunium (strain ATCC 15444).